Here is a 663-residue protein sequence, read N- to C-terminus: MIDKRDDKPFKLKSKYKPSGDQPQAIESLVDNIEGGEKAQILLGATGTGKTYTMSQVISKVNKPTLVIAHNKTLAGQLYGEFKEFFPDNAVEYFVSYYDYYQPEAYVPSSDTYIEKDSSVNDEIDKLRHSATSSLLERNDVIVVASVSCIYGLGSPKEYADSAVSLRPGQEISRDTLLNQLVDIQFERNDIDFQRGCFRVRGDVVEVFPASRDEHAFRVEFFGDEIDRICEIESLTGKTIGEVDHLVLFPATHFVTNDEHMEQSIAKIQAELAEQLQLFESEGKLLEAQRLRQRTEYDIEMLREMGYTSGVENYSRHMDGRLPGEPPYTLLDFFPEDFLIMIDESHMTMGQIKGMYNGDQARKQMLVDYGFRLPSALDNRPLRREEFESHVHQIVYVSATPGEYEMSQTNTIIEQIIRPTGLLDPEIDVRPSMGQMDDLLGEINQRVARDERTFITTLTKKMAEDLTDYLKEMGVKVKYMHSDIKTLERTEIIRDLRLGVFDVLIGINLLREGIDVPEVSLVAILDADKEGFLRNERGLIQTIGRAARNVDGHVIMYADKMTDSMQRAIDETARRREIQIAYNKAHGIVPQTIKKDIRGLISISKTSHNDISKEEMDYESMSRGERKEAINALQKQMQEAAELLDFELAAQMRDLILELKLMD.

A compositionally biased stretch (basic and acidic residues) spans 1–10 (MIDKRDDKPF). The tract at residues 1–23 (MIDKRDDKPFKLKSKYKPSGDQP) is disordered. A Helicase ATP-binding domain is found at 31–418 (DNIEGGEKAQ…TNTIIEQIIR (388 aa)). 44–51 (GATGTGKT) is an ATP binding site. Residues 97-120 (YYDYYQPEAYVPSSDTYIEKDSSV) carry the Beta-hairpin motif. A Helicase C-terminal domain is found at 435–601 (QMDDLLGEIN…TIKKDIRGLI (167 aa)). One can recognise a UVR domain in the interval 627–662 (KEAINALQKQMQEAAELLDFELAAQMRDLILELKLM).

This sequence belongs to the UvrB family. In terms of assembly, forms a heterotetramer with UvrA during the search for lesions. Interacts with UvrC in an incision complex.

It is found in the cytoplasm. The UvrABC repair system catalyzes the recognition and processing of DNA lesions. A damage recognition complex composed of 2 UvrA and 2 UvrB subunits scans DNA for abnormalities. Upon binding of the UvrA(2)B(2) complex to a putative damaged site, the DNA wraps around one UvrB monomer. DNA wrap is dependent on ATP binding by UvrB and probably causes local melting of the DNA helix, facilitating insertion of UvrB beta-hairpin between the DNA strands. Then UvrB probes one DNA strand for the presence of a lesion. If a lesion is found the UvrA subunits dissociate and the UvrB-DNA preincision complex is formed. This complex is subsequently bound by UvrC and the second UvrB is released. If no lesion is found, the DNA wraps around the other UvrB subunit that will check the other stand for damage. This Streptococcus pyogenes serotype M6 (strain ATCC BAA-946 / MGAS10394) protein is UvrABC system protein B.